A 577-amino-acid polypeptide reads, in one-letter code: Moesin (577 aa).

Residues 2–295 (PKTISVRVTT…GNHELYMRRR (294 aa)) form the FERM domain. Residue S74 is modified to Phosphoserine. K79 bears the N6-acetyllysine mark. The residue at position 83 (K83) is an N6-succinyllysine. The [IL]-x-C-x-x-[DE] motif signature appears at 115–120 (IYCPPE). Y116 carries the post-translational modification Phosphotyrosine. C117 carries the post-translational modification S-nitrosocysteine. K139 and K165 each carry N6-acetyllysine. 3 disordered regions span residues 322-342 (LLEN…KIER), 358-453 (TKKA…QMVQ), and 468-549 (STPH…AENM). Over residues 358–401 (TKKAQQELEEQTRRALELEQERKRAQSEAEKLAKERQEAEEAKE) the composition is skewed to basic and acidic residues. Position 407 is a phosphoserine (S407). 2 stretches are compositionally biased toward basic and acidic residues: residues 438-447 (KESEAEECHQ) and 492-519 (AELR…ERVQ). Position 527 is a phosphoserine (S527). Residues 531-549 (NARDESKKTTNDMIHAENM) are compositionally biased toward basic and acidic residues. T558 bears the Phosphothreonine; by ROCK2 and STK10 mark.

As to quaternary structure, in resting T-cells, part of a PAG1-NHERF1-MSN complex which is disrupted upon TCR activation. Interacts with NHERF1. Interacts with PPP1R16B. Interacts with PDZD8. Interacts with SELPLG and SYK; these interactions mediate the activation of SYK by SELPLG. Interacts with PDPN (via cytoplasmic domain); this interaction activates RHOA and promotes epithelial-mesenchymal transition. Interacts with SPN/CD43 cytoplasmic tail. Interacts with CD44. Interacts with ICAM2. Interacts with ICAM3 (via C-terminus). Interacts with PDZD8. Interacts with F-actin. Interacts with CD46. Interacts with PTPN6. In terms of processing, phosphorylation on Thr-558 is crucial for the formation of microvilli-like structures. Phosphorylation by ROCK2 suppresses the head-to-tail association of the N-terminal and C-terminal halves resulting in an opened conformation which is capable of actin and membrane-binding. Phosphorylation on Thr-558 by STK10 negatively regulates lymphocyte migration and polarization. S-nitrosylation of Cys-117 is induced by interferon-gamma and oxidatively-modified low-densitity lipoprotein (LDL(ox)) implicating the iNOS-S100A8/9 transnitrosylase complex.

The protein localises to the cell membrane. It localises to the cytoplasm. Its subcellular location is the cytoskeleton. It is found in the apical cell membrane. The protein resides in the cell projection. The protein localises to the microvillus membrane. It localises to the microvillus. With respect to regulation, a head-to-tail association, of the N-terminal and C-terminal halves results in a closed conformation (inactive form) which is incapable of actin or membrane-binding. In terms of biological role, ezrin-radixin-moesin (ERM) family protein that connects the actin cytoskeleton to the plasma membrane and thereby regulates the structure and function of specific domains of the cell cortex. Tethers actin filaments by oscillating between a resting and an activated state providing transient interactions between moesin and the actin cytoskeleton. Once phosphorylated on its C-terminal threonine, moesin is activated leading to interaction with F-actin and cytoskeletal rearrangement. These rearrangements regulate many cellular processes, including cell shape determination, membrane transport, and signal transduction. The role of moesin is particularly important in immunity acting on both T and B-cells homeostasis and self-tolerance, regulating lymphocyte egress from lymphoid organs. Modulates phagolysosomal biogenesis in macrophages. Participates also in immunologic synapse formation. The polypeptide is Moesin (Rattus norvegicus (Rat)).